The chain runs to 734 residues: MCRFFATAPKGLNELLREELTTFGAENIKTQPTGATFDGDLEVGYRSCLWSRLANRIYLVLLETELPNQEALSSVVQSIDWSKHIDKEGTFAVSFSGQGLGITHSHYGALKIKDGIVDYFREHYQVRPSIDTEVPDIRVHGHLNRNQLTLSLDLSGYSLHQRGYREGIQVEAPLKENVAAAILMRANWPEIAQQGGAFYDPMCGSGTFLVEAALMASDTAPGVAKSGEMLLNYWLGHDESLWQKLVEEAEQREQVGLKHLPNIYGSDISHKSLDVARNSIQAAGYDDVIEIKQMAVEQGRKWGDWSPGLIVCNPPYGERLGEEETVKQIYLKLGEYLKAEFIHWKAAILTCHTELGMFLGIKAKRSHDFFNGAMSCRLFRFEIEEEWFRQPALQPKQDLAEQVLQLQPDLADTDNAKMVSNRIRKNMKGLKSWVKQNDISAYRVYDADIPEYALAIDLYDTLESGLWVVVAEYAPPKTVNPTKAKRRLYEAMSVLPSVFNVSPERIVFKVRSQQKGQDQYERLDEQKAFFTIVENQTRLRVNFTDYLDTGIFLDHRQVRQEVAKLAAGKRLLNLFCYTATATAEAVKAGCKSSLSLDMSKTYLYWAKHNFMCNDINEKQHVLQQENVLEWLETATQNPKDLFDVIFLDPPSFSTSKRMDGTLDIQRDHVDLIQKTLKLLSKDGKLIFSTNLRKFKLDKASFEPDYQIENITQRTMPKDYARNMKIHQAWLFSRQ.

Residues 43-154 (VGYRSCLWSR…RNQLTLSLDL (112 aa)) enclose the THUMP domain.

This sequence belongs to the methyltransferase superfamily. RlmKL family.

It localises to the cytoplasm. The catalysed reaction is guanosine(2445) in 23S rRNA + S-adenosyl-L-methionine = N(2)-methylguanosine(2445) in 23S rRNA + S-adenosyl-L-homocysteine + H(+). It catalyses the reaction guanosine(2069) in 23S rRNA + S-adenosyl-L-methionine = N(2)-methylguanosine(2069) in 23S rRNA + S-adenosyl-L-homocysteine + H(+). Its function is as follows. Specifically methylates the guanine in position 2445 (m2G2445) and the guanine in position 2069 (m7G2069) of 23S rRNA. The polypeptide is Ribosomal RNA large subunit methyltransferase K/L (Hydrogenovibrio crunogenus (strain DSM 25203 / XCL-2) (Thiomicrospira crunogena)).